A 410-amino-acid polypeptide reads, in one-letter code: Zinc finger protein 322 (410 aa).

8 consecutive C2H2-type zinc fingers follow at residues 81–103, 109–131, 137–159, 165–187, 193–215, 221–243, 249–271, and 277–299; these read YRCD…QRIH, YKCS…QRTH, YTCD…QRSH, YLCN…RRTH, FKCL…QRTH, YKCN…KRVH, YKCG…QRVH, and YKCL…QATH. The segment at 303–325 adopts a C2H2-type 9; degenerate zinc-finger fold; sequence FKCLEYEKSFNCSSDFIVHQRIH. The segment at 361-383 adopts a C2H2-type 10; degenerate zinc-finger fold; it reads YKYSVCDKTFHHSSALLQHQTVH. Ser400 is modified (phosphoserine).

It belongs to the krueppel C2H2-type zinc-finger protein family. Interacts with POU5F1.

It localises to the nucleus. The protein resides in the cytoplasm. Functionally, transcriptional activator. Important for maintenance of pluripotency in embryonic stem cells. Binds directly to the POU5F1 distal enhancer and the NANOG proximal promoter, and enhances expression of both genes. Can also bind to numerous other gene promoters and regulates expression of many other pluripotency factors, either directly or indirectly. Promotes inhibition of MAPK signaling during embryonic stem cell differentiation. The chain is Zinc finger protein 322 (Znf322) from Mus musculus (Mouse).